The following is a 181-amino-acid chain: Inner membrane-spanning protein YciB (181 aa).

The next 5 membrane-spanning stretches (helical) occupy residues 3–23 (LLFD…FGIY), 54–74 (SLAI…PWFI), 81–101 (IYWL…KPLI), 119–139 (LNLA…YVAY), and 149–169 (FKLF…AFYL).

Belongs to the YciB family.

It is found in the cell inner membrane. Functionally, plays a role in cell envelope biogenesis, maintenance of cell envelope integrity and membrane homeostasis. The protein is Inner membrane-spanning protein YciB of Legionella pneumophila subsp. pneumophila (strain Philadelphia 1 / ATCC 33152 / DSM 7513).